Reading from the N-terminus, the 237-residue chain is Thrombin-like enzyme agkihpin-1 (237 aa).

Residue M1 is a propeptide. Positions 2-228 (ILGDDECNIN…HLDWIENIIA (227 aa)) constitute a Peptidase S1 domain. C27 and C43 are oxidised to a cystine. The active-site Charge relay system is H42. A glycan (N-linked (GlcNAc...) asparagine) is linked at N80. The active-site Charge relay system is D87. 3 disulfides stabilise this stretch: C119-C189, C151-C168, and C179-C204. Catalysis depends on S183, which acts as the Charge relay system.

The protein belongs to the peptidase S1 family. Snake venom subfamily. Expressed by the venom gland.

The protein resides in the secreted. The hydrolysis of TAMe (tosyl-arginine methyl ester) substrate is activated by Ca(2+), Fe(3+), Mg(2+) and Zn(2+), and inhibited by EDTA, PMSF and DTT. Functionally, thrombin-like enzyme that shows fibrinogenolytic activity against bovine fibrinogen alpha and beta chains, but not gamma chain. Hydrolyzes fibrin. Enhances ADP-induced human platelet aggregation. Has arginine esterase activity for TAMe (tosyl-arginine methyl ester) substrate. Reduces thrombin-induced thrombosis. Does not have hemorrhagic activity. Reduces the motility of human liver cancer HepG2 cells in a wound-healing assay. The polypeptide is Thrombin-like enzyme agkihpin-1 (Gloydius halys (Chinese water mocassin)).